Here is a 1167-residue protein sequence, read N- to C-terminus: Kinesin-like protein KIN-14M (1167 aa).

The interval 93–130 is disordered; the sequence is PRKENDPGTQNSEGRRKIPKNPAMSEPSSPLSQTTLSS. Residues 117-130 are compositionally biased toward low complexity; the sequence is SEPSSPLSQTTLSS. 3 coiled-coil regions span residues 271–333, 366–398, and 432–489; these read VHQM…KEEM, AKYR…AMKS, and KQEL…ESRS. In terms of domain architecture, Kinesin motor spans 572–900; sequence NIRVHCRIRP…LKFADRVSGV (329 aa). 656 to 663 is a binding site for ATP; that stretch reads GQTGSGKT. A coiled-coil region spans residues 907 to 944; the sequence is ANKEGKDIKEFKEQLSLLKDKIAKKDEEISRLQLQSHN. Disordered regions lie at residues 955 to 974 and 1083 to 1167; these read SLLK…SKIQ and PDQD…KRWT. The segment covering 958 to 972 has biased composition (low complexity); sequence KHSSSSPGISSLGSK. Polar residues-rich tracts occupy residues 1113–1124 and 1151–1167; these read ASRTTTPKTPQS and TQAT…KRWT.

It belongs to the TRAFAC class myosin-kinesin ATPase superfamily. Kinesin family. KIN-14 subfamily.

The protein is Kinesin-like protein KIN-14M of Oryza sativa subsp. japonica (Rice).